A 243-amino-acid chain; its full sequence is Small ribosomal subunit protein eS4 (243 aa).

An S4 RNA-binding domain is found at 43–105 (IPLLYIVRDY…TGEHYRVLPN (63 aa)).

The protein belongs to the eukaryotic ribosomal protein eS4 family.

The polypeptide is Small ribosomal subunit protein eS4 (rps4e) (Pyrococcus horikoshii (strain ATCC 700860 / DSM 12428 / JCM 9974 / NBRC 100139 / OT-3)).